The chain runs to 346 residues: Short-wave-sensitive opsin 1 (346 aa).

Residues 1 to 31 (MSGEDEFYLFQNISSVGPWDGPQYHIAPVWA) lie on the Extracellular side of the membrane. N-linked (GlcNAc...) asparagine glycosylation is present at Asn12. The chain crosses the membrane as a helical span at residues 32 to 56 (FHLQAAFMGFVFFAGTPLNATVLVA). The Cytoplasmic portion of the chain corresponds to 57 to 68 (TLHYKKLRQPLN). A helical transmembrane segment spans residues 69–94 (YILVNVSLGGFLFCIFSVFTVFIASC). The Extracellular portion of the chain corresponds to 95–108 (HGYFLFGRHVCALE). A disulfide bridge links Cys105 with Cys182. A helical transmembrane segment spans residues 109 to 128 (AFLGSVAGLVTGWSLAFLAF). The Cytoplasmic segment spans residues 129-147 (ERYLVICKPFGNIRFNSKH). A helical membrane pass occupies residues 148-171 (ALTVVLITWTIGIGVSIPPFFGWS). The Extracellular segment spans residues 172–197 (RFIPEGLQCSCGPDWYTVGTKYRSEH). A helical transmembrane segment spans residues 198-225 (YTWFLFIFCFIIPLSLICFSYFQLLRTL). At 226–247 (RAVAAQQQESATTQKAEREVSH) the chain is on the cytoplasmic side. A helical membrane pass occupies residues 248-271 (MVVVMVGSFCLCYVPYAALAMYMV). The Extracellular portion of the chain corresponds to 272–279 (NNRNHGLY). A helical membrane pass occupies residues 280–304 (LRLVTIPAFFSKSSCVYNPIIYCFM). N6-(retinylidene)lysine is present on Lys291. The Cytoplasmic portion of the chain corresponds to 305-346 (NKQFRACILEMVCRKPMTDESDMSGSQKTEVSTVSSSKVGPH). A disordered region spans residues 322–346 (TDESDMSGSQKTEVSTVSSSKVGPH). A compositionally biased stretch (low complexity) spans 330–346 (SQKTEVSTVSSSKVGPH).

It belongs to the G-protein coupled receptor 1 family. Opsin subfamily. In terms of processing, phosphorylated on some or all of the serine and threonine residues present in the C-terminal region. In terms of tissue distribution, expressed in cone photoreceptor cells.

The protein resides in the cell membrane. It localises to the photoreceptor inner segment. Its subcellular location is the cell projection. It is found in the cilium. The protein localises to the photoreceptor outer segment. The protein resides in the cytoplasm. It localises to the perinuclear region. Visual pigments are the light-absorbing molecules that mediate vision. They consist of an apoprotein, opsin, covalently linked to cis-retinal. Required for the maintenance of cone outer segment organization in the ventral retina, but not essential for the maintenance of functioning cone photoreceptors. Involved in ensuring correct abundance and localization of retinal membrane proteins. May increase spectral sensitivity in dim light. In Rattus norvegicus (Rat), this protein is Short-wave-sensitive opsin 1 (Opn1sw).